The sequence spans 438 residues: Protein translocase subunit SecY (438 aa).

The next 10 membrane-spanning stretches (helical) occupy residues I18–G38, V76–P96, I121–L141, I154–M174, L177–A197, G212–V232, V269–V289, P315–V335, L375–G395, and G398–L418.

It belongs to the SecY/SEC61-alpha family. Component of the Sec protein translocase complex. Heterotrimer consisting of SecY, SecE and SecG subunits. The heterotrimers can form oligomers, although 1 heterotrimer is thought to be able to translocate proteins. Interacts with the ribosome. Interacts with SecDF, and other proteins may be involved. Interacts with SecA.

It is found in the cell membrane. In terms of biological role, the central subunit of the protein translocation channel SecYEG. Consists of two halves formed by TMs 1-5 and 6-10. These two domains form a lateral gate at the front which open onto the bilayer between TMs 2 and 7, and are clamped together by SecE at the back. The channel is closed by both a pore ring composed of hydrophobic SecY resides and a short helix (helix 2A) on the extracellular side of the membrane which forms a plug. The plug probably moves laterally to allow the channel to open. The ring and the pore may move independently. The chain is Protein translocase subunit SecY from Mycobacterium leprae (strain TN).